Consider the following 88-residue polypeptide: Small ribosomal subunit protein bS16c (88 aa).

The protein belongs to the bacterial ribosomal protein bS16 family.

It localises to the plastid. The protein resides in the chloroplast. This chain is Small ribosomal subunit protein bS16c, found in Gossypium hirsutum (Upland cotton).